A 245-amino-acid polypeptide reads, in one-letter code: 4-hydroxy-tetrahydrodipicolinate reductase (245 aa).

Residues 7–12, 75–77, and 102–105 contribute to the NAD(+) site; these read GARGKV, GTT, and APNF. The active-site Proton donor/acceptor is the His132. His133 serves as a coordination point for (S)-2,3,4,5-tetrahydrodipicolinate. Residue Lys136 is the Proton donor of the active site. 142–143 is a binding site for (S)-2,3,4,5-tetrahydrodipicolinate; it reads GT.

The protein belongs to the DapB family.

Its subcellular location is the cytoplasm. The catalysed reaction is (S)-2,3,4,5-tetrahydrodipicolinate + NAD(+) + H2O = (2S,4S)-4-hydroxy-2,3,4,5-tetrahydrodipicolinate + NADH + H(+). The enzyme catalyses (S)-2,3,4,5-tetrahydrodipicolinate + NADP(+) + H2O = (2S,4S)-4-hydroxy-2,3,4,5-tetrahydrodipicolinate + NADPH + H(+). It participates in amino-acid biosynthesis; L-lysine biosynthesis via DAP pathway; (S)-tetrahydrodipicolinate from L-aspartate: step 4/4. Functionally, catalyzes the conversion of 4-hydroxy-tetrahydrodipicolinate (HTPA) to tetrahydrodipicolinate. This chain is 4-hydroxy-tetrahydrodipicolinate reductase, found in Mycolicibacterium vanbaalenii (strain DSM 7251 / JCM 13017 / BCRC 16820 / KCTC 9966 / NRRL B-24157 / PYR-1) (Mycobacterium vanbaalenii).